A 175-amino-acid polypeptide reads, in one-letter code: Alkyl hydroperoxide reductase AhpD (175 aa).

The Proton donor role is filled by C131. C131 and C134 are oxidised to a cystine. The active-site Cysteine sulfenic acid (-SOH) intermediate is C134.

This sequence belongs to the AhpD family.

It catalyses the reaction N(6)-[(R)-dihydrolipoyl]-L-lysyl-[lipoyl-carrier protein] + a hydroperoxide = N(6)-[(R)-lipoyl]-L-lysyl-[lipoyl-carrier protein] + an alcohol + H2O. In terms of biological role, antioxidant protein with alkyl hydroperoxidase activity. Required for the reduction of the AhpC active site cysteine residues and for the regeneration of the AhpC enzyme activity. This Brucella canis (strain ATCC 23365 / NCTC 10854 / RM-666) protein is Alkyl hydroperoxide reductase AhpD.